The primary structure comprises 174 residues: Gamma-crystallin A (174 aa).

2 consecutive Beta/gamma crystallin 'Greek key' domains span residues 2–40 (GKITFYEDRDFQGRCYNCISDCPNLRVYFSRCNSIRVDS) and 41–83 (GCWM…RIIP). The connecting peptide stretch occupies residues 84-87 (HTSS). 2 Beta/gamma crystallin 'Greek key' domains span residues 88–128 (HKLR…HVLE) and 129–171 (GCWV…RRVT).

It belongs to the beta/gamma-crystallin family. As to quaternary structure, monomer.

In terms of biological role, crystallins are the dominant structural components of the vertebrate eye lens. This is Gamma-crystallin A (CRYGA) from Homo sapiens (Human).